A 424-amino-acid chain; its full sequence is MNKIKIAFLVFSLILLCTGCIEDKAVVEKNTAVFEESTINADSVSDYDIAAANNAFAFDMYSQLARRETGDHENVFFSPHSISASMAICYEGAEDTTKEQISNVFYFPSNKTVLKVRMERINDKINSVNSDYELQTANALWVQEGYPVKETYIHNVQKYYDGEVTNLDFAGKPDASRDTINEWVEARTNDKIKDLVPEDAITADARLIITNAVYFNGKWMYEFDKEMTGKKSFYPTKEEDISVDMMYTCNRFNYGETSKAKIIELPYRGNDLSMYVVLPKSNNIEKFETEFTLNDYTELKNDMEVVEEVKTTIPKFKFETKTELSNSLIEMGVVDAFGQADFSGISDSPLEISRVIHQAFIDVKEEGTEAAAATMEEMAMGVSISWDAKPKEFTADHPFMFFIEDGRTNCILFMGKVEYPEYEE.

This sequence belongs to the serpin family.

This is an uncharacterized protein from Methanosarcina acetivorans (strain ATCC 35395 / DSM 2834 / JCM 12185 / C2A).